The primary structure comprises 148 residues: UPF0260 protein YE2365 (148 aa).

The protein belongs to the UPF0260 family.

This is UPF0260 protein YE2365 from Yersinia enterocolitica serotype O:8 / biotype 1B (strain NCTC 13174 / 8081).